The chain runs to 448 residues: tRNA(Ile)-lysidine synthase (448 aa).

Position 25-30 (serine 25–serine 30) interacts with ATP.

The protein belongs to the tRNA(Ile)-lysidine synthase family.

The protein localises to the cytoplasm. The catalysed reaction is cytidine(34) in tRNA(Ile2) + L-lysine + ATP = lysidine(34) in tRNA(Ile2) + AMP + diphosphate + H(+). Its function is as follows. Ligates lysine onto the cytidine present at position 34 of the AUA codon-specific tRNA(Ile) that contains the anticodon CAU, in an ATP-dependent manner. Cytidine is converted to lysidine, thus changing the amino acid specificity of the tRNA from methionine to isoleucine. In Brucella canis (strain ATCC 23365 / NCTC 10854 / RM-666), this protein is tRNA(Ile)-lysidine synthase.